The primary structure comprises 493 residues: Monodehydroascorbate reductase, chloroplastic/mitochondrial (493 aa).

Residues 1–51 (MSAVRRVMALASTTLPTKSGLSLWCPSSPSLARRFPARFSPIGSRIASRSL) constitute a chloroplast and mitochondrion transit peptide. FAD is bound by residues 68–71 (GGNA), Glu-95, Arg-102, Lys-107, and 201–202 (RE). Residues 224–230 (GGYIGME), Glu-248, Arg-254, and Gly-313 each bind NAD(+). 226–230 (YIGME) is an NADP(+) binding site. 2 residues coordinate NADP(+): Arg-254 and Gly-313. Asp-351 contacts FAD. 367–368 (EH) contacts NAD(+). 367-368 (EH) is a binding site for NADP(+). FAD is bound at residue Val-369. Arg-373 contacts L-ascorbate. Position 398 (Tyr-398) interacts with FAD. Tyr-398 is an NAD(+) binding site. NADP(+) is bound at residue Tyr-398. Arg-400 contributes to the L-ascorbate binding site.

This sequence belongs to the FAD-dependent oxidoreductase family. As to quaternary structure, interacts in vitro with TRXy. FAD serves as cofactor.

It localises to the plastid. The protein localises to the chloroplast. The protein resides in the mitochondrion. It carries out the reaction 2 monodehydro-L-ascorbate radical + NADH + H(+) = 2 L-ascorbate + NAD(+). It catalyses the reaction 2,4,6-trinitrotoluene + NADH = 2,4,6-trinitrotoluene radical + e(-) + NAD(+). With respect to regulation, redox regulation of the activity by thioredoxin TRXy1. Its function is as follows. Catalyzes the conversion of monodehydroascorbate (MDA) to ascorbate, oxidizing NADH in the process. Mediates phytotoxicity of 2,4,6-trinitrotoluene (TNT), an explosive and environmental pollutant, by reducing TNT and forming a nitro radical that spontaneously reacts with atmospheric oxygen, generating reactive superoxide. Can also use 1-chloro-2,4-dinitrobenzene (CDNB) as substrate, but not 1-chloro-4-nitrobenzene (CNB). The protein is Monodehydroascorbate reductase, chloroplastic/mitochondrial of Arabidopsis thaliana (Mouse-ear cress).